The chain runs to 166 residues: Large ribosomal subunit protein eL21 (166 aa).

It belongs to the eukaryotic ribosomal protein eL21 family. Component of the large ribosomal subunit.

The protein resides in the cytoplasm. It is found in the cytosol. Its subcellular location is the endoplasmic reticulum. In terms of biological role, component of the large ribosomal subunit. The ribosome is a large ribonucleoprotein complex responsible for the synthesis of proteins in the cell. This is Large ribosomal subunit protein eL21 (RPL21) from Entamoeba histolytica (strain ATCC 30459 / HM-1:IMSS / ABRM).